The chain runs to 2616 residues: Serine protease ndl (2616 aa).

The N-terminal stretch at 1 to 43 (MNYNMDEMEATRLLRHPRRWWSIGFGKRIVAISILVIIVLLFS) is a signal peptide. A phosphoserine mark is found at S215 and S220. One copy of the WIID 1 repeat lies at 261–269 (ISWIIDGHD). N-linked (GlcNAc...) asparagine glycosylation is present at N291. The stretch at 320–328 (ISWILDHFD) is one WIID 2 repeat. N-linked (GlcNAc...) asparagine glycosylation is present at N347. The segment at 352 to 375 (SASSEPIVDTENTNSDHVPTTENG) is disordered. N379 carries an N-linked (GlcNAc...) asparagine glycan. The WIID 3 repeat unit spans residues 399 to 407 (FDWILDGEE). The N-linked (GlcNAc...) asparagine glycan is linked to N417. WIID repeat units lie at residues 446–454 (FDWIIDGRE) and 477–485 (FDWIIDGEE). Residues N492 and N515 are each glycosylated (N-linked (GlcNAc...) asparagine). One copy of the WIID 6 repeat lies at 528 to 536 (FDWIIDGGE). The segment covering 537–547 (SSGEVSTSSTS) has biased composition (low complexity). Residues 537-574 (SSGEVSTSSTSQPKLTTREAISNPESPRSSHPLDNPTS) form a disordered region. Polar residues predominate over residues 548-565 (QPKLTTREAISNPESPRS). 2 positions are modified to phosphoserine: S574 and S581. N598 is a glycosylation site (N-linked (GlcNAc...) asparagine). Residue S794 is glycosylated (O-linked (Xyl...) (glycosaminoglycan) serine). A disordered region spans residues 798-817 (GQGANIFSKNASPQKPTNGQ). The span at 804-817 (FSKNASPQKPTNGQ) shows a compositional bias: polar residues. N827 carries an N-linked (GlcNAc...) asparagine glycan. O-linked (Xyl...) (glycosaminoglycan) serine glycosylation occurs at S829. A glycan (N-linked (GlcNAc...) asparagine) is linked at N861. 2 consecutive LDL-receptor class A domains span residues 889-929 (SRCP…ACTC) and 955-1006 (FGCE…QCSM). 3 disulfide bridges follow: C891–C905, C899–C918, and C912–C927. The region spanning 929-956 (CADRVDEERLCDGYEDCPMGEDELGCFG) is the LDL-receptor class A 2; truncated domain. 3 disulfides stabilise this stretch: C957-C982, C964-C995, and C989-C1004. The N-linked (GlcNAc...) asparagine glycan is linked to N975. The Cell attachment site motif lies at 1031–1033 (RGD). Residue N1064 is glycosylated (N-linked (GlcNAc...) asparagine). A phosphoserine mark is found at S1134 and S1136. In terms of domain architecture, Peptidase S1 1 spans 1145-1383 (IVGGSYTSAL…YLDWLEMATT (239 aa)). A disulfide bridge connects residues C1170 and C1186. Active-site charge relay system residues include H1185 and D1233. 6 cysteine pairs are disulfide-bonded: C1276–C1338, C1305–C1317, C1328–C1359, C1396–C1408, C1401–C1421, and C1415–C1430. The Charge relay system role is filled by S1332. The region spanning 1394–1432 (QLCPGFICVWGGKRCIAKRQRCDRNVDCLGGEDEVGCTY) is the LDL-receptor class A 4 domain. N1445 carries an N-linked (GlcNAc...) asparagine glycan. 2 disordered regions span residues 1530-1557 (FTVS…PSTN) and 1683-1704 (PTTT…HSEK). Low complexity-rich tracts occupy residues 1537 to 1557 (TSPS…PSTN) and 1683 to 1700 (PTTT…SSST). The region spanning 1713–1743 (FVCKKMSQIVDIMMRCDRKVDCEDGTDELDC) is the LDL-receptor class A 5; truncated domain. Intrachain disulfides connect C1728/C1745, C1734/C1764, C1758/C1773, C1776/C1789, C1783/C1802, and C1796/C1811. Residues 1745–1775 (CKDYLKGSLKGLICDGKADCEDLTDEQNCVE) enclose the LDL-receptor class A 6; truncated domain. The 40-residue stretch at 1774 to 1813 (VECQSNEFRCPLSKTCLPLSSRCDNKVDCKFKEDEKDCFA) folds into the LDL-receptor class A 7 domain. N1878, N1956, and N2023 each carry an N-linked (GlcNAc...) asparagine glycan. Residues 2027–2301 (LVNEQLHEAI…LQDIIDKPSC (275 aa)) enclose the Peptidase S1 2 domain. A disulfide bond links C2055 and C2071. N2144, N2173, N2197, N2237, and N2269 each carry an N-linked (GlcNAc...) asparagine glycan. C2177 and C2230 are disulfide-bonded. 3 consecutive LDL-receptor class A domains span residues 2308–2346 (PDCS…KCRQ), 2349–2389 (QQCA…ICSC), and 2419–2459 (CNCT…YCFG). 6 disulfide bridges follow: C2310–C2320, C2315–C2333, C2327–C2344, C2351–C2364, C2358–C2377, and C2371–C2387. The 33-residue stretch at 2387–2419 (CSCFTYLQATDPSKICDGKRNCWDKSDESSVLC) folds into the LDL-receptor class A 10; truncated domain. N2420 is a glycosylation site (N-linked (GlcNAc...) asparagine). 3 disulfides stabilise this stretch: C2421–C2435, C2428–C2448, and C2442–C2457. 2 N-linked (GlcNAc...) asparagine glycosylation sites follow: N2556 and N2601.

Belongs to the peptidase S1 family. In terms of processing, requires cleavage for activation (presumably). In terms of tissue distribution, follicle.

It is found in the secreted. Its subcellular location is the extracellular space. It localises to the extracellular matrix. Component of the extracellular signaling pathway that establishes the dorsal-ventral pathway of the embryo. A protease cascade involving ndl, gd, snk and ea results in activation of the spz Toll receptor ligand; acts upstream of gd, snk and ea and is required for proteolytic processing of gd. Activation of ea requires activation of the ndl-gd-snk protease cascade and sulfation of a vitelline membrane component by pip. Localized activation of the Toll receptor in the ventral region of the embryo defines cell identities along the dorsal-ventral continuum. The protein is Serine protease ndl of Drosophila melanogaster (Fruit fly).